Reading from the N-terminus, the 37-residue chain is Non-specific lipid-transfer protein (37 aa).

Belongs to the plant LTP family.

Functionally, plant non-specific lipid-transfer proteins transfer phospholipids as well as galactolipids across membranes. May play a role in wax or cutin deposition in the cell walls of expanding epidermal cells and certain secretory tissues. The sequence is that of Non-specific lipid-transfer protein from Artemisia vulgaris (Mugwort).